A 199-amino-acid polypeptide reads, in one-letter code: Peptidyl-tRNA hydrolase (199 aa).

Tyr15 lines the tRNA pocket. Catalysis depends on His20, which acts as the Proton acceptor. The tRNA site is built by Phe66, Asn68, and Asn114.

This sequence belongs to the PTH family. Monomer.

It localises to the cytoplasm. The enzyme catalyses an N-acyl-L-alpha-aminoacyl-tRNA + H2O = an N-acyl-L-amino acid + a tRNA + H(+). Hydrolyzes ribosome-free peptidyl-tRNAs (with 1 or more amino acids incorporated), which drop off the ribosome during protein synthesis, or as a result of ribosome stalling. Its function is as follows. Catalyzes the release of premature peptidyl moieties from peptidyl-tRNA molecules trapped in stalled 50S ribosomal subunits, and thus maintains levels of free tRNAs and 50S ribosomes. In Cupriavidus pinatubonensis (strain JMP 134 / LMG 1197) (Cupriavidus necator (strain JMP 134)), this protein is Peptidyl-tRNA hydrolase.